The sequence spans 709 residues: Cell adhesion molecule CEACAM3 (709 aa).

The first 34 residues, 1-34 (MELSSVLPCKRCTPWRGLLLTASLLTCWLLPTTA), serve as a signal peptide directing secretion. 5 consecutive Ig-like V-type domains span residues 35 to 142 (QVSI…HVYF), 155 to 262 (QLSI…QVDT), 275 to 382 (QLTV…QVNT), 393 to 500 (LLTI…SVHT), and 509 to 616 (QLVI…HIYK). 16 N-linked (GlcNAc...) asparagine glycosylation sites follow: asparagine 73, asparagine 86, asparagine 103, asparagine 110, asparagine 133, asparagine 207, asparagine 224, asparagine 231, asparagine 327, asparagine 344, asparagine 351, asparagine 381, asparagine 462, asparagine 561, asparagine 578, and asparagine 585. Positions 631–695 (RVKSSVVLTC…YRCEVSNPVS (65 aa)) constitute an Ig-like C2-type domain.

The protein belongs to the immunoglobulin superfamily. CEA family. As to expression, expression detected only in placenta.

Possibly involved in cell adhesion. In Rattus norvegicus (Rat), this protein is Cell adhesion molecule CEACAM3.